Here is a 580-residue protein sequence, read N- to C-terminus: D-erythrulose kinase (580 aa).

The 321-residue stretch at 7–327 (DPARFTEDML…WAAPADTPAY (321 aa)) folds into the DhaK domain. His217 functions as the Tele-hemiaminal-histidine intermediate in the catalytic mechanism. Residues 329–360 (KGAAQQHVSGERRSEATARSASSGPKLAELSD) are disordered. A DhaL domain is found at 368 to 570 (RLVARAFDAM…LALCARTVAD (203 aa)). ATP contacts are provided by residues 397–403 (DGDHGRG), 443–444 (TS), Gly485, Arg542, and 555–557 (DAG).

It carries out the reaction D-erythrulose + ATP = D-erythrulose 4-phosphate + ADP + H(+). Its pathway is carbohydrate metabolism; erythritol degradation. The protein operates within carbohydrate metabolism; D-threitol degradation. Catalyzes the phosphorylation of D-erythrulose to D-erythrulose-4P. Involved in the degradation pathways of erythritol and D-threitol, that allow M.smegmatis to grow on these compounds as the sole carbon source. This is D-erythrulose kinase from Mycolicibacterium smegmatis (strain ATCC 700084 / mc(2)155) (Mycobacterium smegmatis).